Here is a 92-residue protein sequence, read N- to C-terminus: Small ribosomal subunit protein bS20 (92 aa).

A disordered region spans residues Met-1–Arg-25.

It belongs to the bacterial ribosomal protein bS20 family.

Functionally, binds directly to 16S ribosomal RNA. The polypeptide is Small ribosomal subunit protein bS20 (Paraburkholderia phytofirmans (strain DSM 17436 / LMG 22146 / PsJN) (Burkholderia phytofirmans)).